A 1730-amino-acid chain; its full sequence is Meiosis regulator and mRNA stability factor 1 (1730 aa).

Residue Ser65 is modified to Phosphoserine. Residues 352-489 form the NYN domain; the sequence is IGVFWDIENC…ALLHHANQLI (138 aa). The span at 655–668 shows a compositional bias: basic and acidic residues; the sequence is MESKSGNRNSDHQQ. The tract at residues 655–722 is disordered; it reads MESKSGNRNS…VNSPVEKKKR (68 aa). Residue Tyr698 is modified to Phosphotyrosine. Residues 781-860 form the RRM domain; that stretch reads VDIQVSNVDY…KKILVSLSTG (80 aa). HTH OST-type domains lie at 865 to 939 and 993 to 1069; these read SLSL…SPLG and SLKV…HNKP. Ser1081 and Ser1083 each carry phosphoserine. HTH OST-type domains follow at residues 1089-1163, 1165-1241, 1249-1324, 1325-1400, 1401-1475, and 1476-1550; these read QLIQ…LTHR, QVKR…RKRE, RTKQ…TEVE, RFKA…INRK, SLRS…VKLT, and SLYL…LKND. The tract at residues 1667–1714 is disordered; that stretch reads VQKGNLSCDSSPSSPAASPAPPGPSSEAPRPLFSKDAVESPAKKQPKN. At Ser1684 the chain carries Phosphoserine.

Interacts with LIMK2. As to expression, predominantly present in oocytes and barely detectable in granulosa cells (at protein level).

The protein resides in the peroxisome. Functionally, essential regulator of oogenesis required for female meiotic progression to repress transposable elements and preventing their mobilization, which is essential for the germline integrity. Probably acts via some RNA metabolic process, equivalent to the piRNA system in males, which mediates the repression of transposable elements during meiosis by forming complexes composed of RNAs and governs the methylation and subsequent repression of transposons. Also required to protect from DNA double-strand breaks. The polypeptide is Meiosis regulator and mRNA stability factor 1 (Marf1) (Mus musculus (Mouse)).